Here is a 394-residue protein sequence, read N- to C-terminus: Elongation factor Tu (394 aa).

One can recognise a tr-type G domain in the interval 10–204 (KPHINVGTIG…ALDNYIPEPK (195 aa)). Residues 19–26 (GHVDHGKT) are G1. 19 to 26 (GHVDHGKT) lines the GTP pocket. Position 26 (T26) interacts with Mg(2+). The interval 60–64 (GITIN) is G2. The segment at 81-84 (DCPG) is G3. Residues 81 to 85 (DCPGH) and 136 to 139 (NKCD) each bind GTP. Positions 136–139 (NKCD) are G4. A G5 region spans residues 174-176 (SAL).

Belongs to the TRAFAC class translation factor GTPase superfamily. Classic translation factor GTPase family. EF-Tu/EF-1A subfamily. Monomer.

The protein resides in the cytoplasm. The catalysed reaction is GTP + H2O = GDP + phosphate + H(+). GTP hydrolase that promotes the GTP-dependent binding of aminoacyl-tRNA to the A-site of ribosomes during protein biosynthesis. This is Elongation factor Tu from Blochmanniella pennsylvanica (strain BPEN).